A 248-amino-acid chain; its full sequence is Ubiquinone/menaquinone biosynthesis C-methyltransferase UbiE (248 aa).

Residues Ser68 and Asp92 each coordinate S-adenosyl-L-methionine.

This sequence belongs to the class I-like SAM-binding methyltransferase superfamily. MenG/UbiE family.

It carries out the reaction a 2-demethylmenaquinol + S-adenosyl-L-methionine = a menaquinol + S-adenosyl-L-homocysteine + H(+). It catalyses the reaction a 2-methoxy-6-(all-trans-polyprenyl)benzene-1,4-diol + S-adenosyl-L-methionine = a 5-methoxy-2-methyl-3-(all-trans-polyprenyl)benzene-1,4-diol + S-adenosyl-L-homocysteine + H(+). It participates in quinol/quinone metabolism; menaquinone biosynthesis; menaquinol from 1,4-dihydroxy-2-naphthoate: step 2/2. The protein operates within cofactor biosynthesis; ubiquinone biosynthesis. In terms of biological role, methyltransferase required for the conversion of demethylmenaquinol (DMKH2) to menaquinol (MKH2) and the conversion of 2-polyprenyl-6-methoxy-1,4-benzoquinol (DDMQH2) to 2-polyprenyl-3-methyl-6-methoxy-1,4-benzoquinol (DMQH2). The protein is Ubiquinone/menaquinone biosynthesis C-methyltransferase UbiE of Rickettsia felis (strain ATCC VR-1525 / URRWXCal2) (Rickettsia azadi).